Here is a 484-residue protein sequence, read N- to C-terminus: Regulator of G-protein signaling 9 (484 aa).

Residues 30 to 105 form the DEP domain; the sequence is PDTGVKTQSQ…PDSSLYRFQT (76 aa). Positions 219 to 280 constitute a G protein gamma domain; that stretch reads ITAVKKEIMY…ITDDTQFWDL (62 aa). Residues 299–414 form the RGS domain; sequence NFSELIRDPK…LKSPIYKEML (116 aa).

As to quaternary structure, heterodimer with Gbeta5. Interacts with RGS7BP, leading to regulate the subcellular location of the heterodimer formed with Gbeta5. Component of the RGS9-1-Gbeta5 complex composed of RGS9 (RGS9-1), Gbeta5 (GNB5) and RGS9BP. In terms of processing, phosphorylation is decreased by light exposition.

Its subcellular location is the membrane. Inhibits signal transduction by increasing the GTPase activity of G protein alpha subunits thereby driving them into their inactive GDP-bound form. Binds to G(t)-alpha. Involved in phototransduction; key element in the recovery phase of visual transduction. In Tamias striatus (Eastern chipmunk), this protein is Regulator of G-protein signaling 9.